We begin with the raw amino-acid sequence, 468 residues long: Ribulose bisphosphate carboxylase large chain (468 aa).

At K5 the chain carries N6,N6,N6-trimethyllysine. Substrate contacts are provided by N114 and T164. K166 acts as the Proton acceptor in catalysis. Substrate is bound at residue K168. Mg(2+) is bound by residues K192, D194, and E195. K192 carries the post-translational modification N6-carboxylysine. The active-site Proton acceptor is H285. Positions 286, 318, and 370 each coordinate substrate.

Belongs to the RuBisCO large chain family. Type I subfamily. As to quaternary structure, heterohexadecamer of 8 large chains and 8 small chains; disulfide-linked. The disulfide link is formed within the large subunit homodimers. It depends on Mg(2+) as a cofactor. Post-translationally, the disulfide bond which can form in the large chain dimeric partners within the hexadecamer appears to be associated with oxidative stress and protein turnover.

The protein localises to the plastid. Its subcellular location is the chloroplast. It carries out the reaction 2 (2R)-3-phosphoglycerate + 2 H(+) = D-ribulose 1,5-bisphosphate + CO2 + H2O. The catalysed reaction is D-ribulose 1,5-bisphosphate + O2 = 2-phosphoglycolate + (2R)-3-phosphoglycerate + 2 H(+). RuBisCO catalyzes two reactions: the carboxylation of D-ribulose 1,5-bisphosphate, the primary event in carbon dioxide fixation, as well as the oxidative fragmentation of the pentose substrate in the photorespiration process. Both reactions occur simultaneously and in competition at the same active site. This chain is Ribulose bisphosphate carboxylase large chain, found in Salvia divinorum (Maria pastora).